Here is a 553-residue protein sequence, read N- to C-terminus: Arginine--tRNA ligase (553 aa).

A 'HIGH' region motif is present at residues Ala-130 to Gly-140.

This sequence belongs to the class-I aminoacyl-tRNA synthetase family. In terms of assembly, monomer.

It localises to the cytoplasm. It carries out the reaction tRNA(Arg) + L-arginine + ATP = L-arginyl-tRNA(Arg) + AMP + diphosphate. The sequence is that of Arginine--tRNA ligase from Corynebacterium aurimucosum (strain ATCC 700975 / DSM 44827 / CIP 107346 / CN-1) (Corynebacterium nigricans).